The following is a 495-amino-acid chain: Cytochrome P450 94C1 (495 aa).

A helical transmembrane segment spans residues 2–22 (LLIISFTIVSFFFIIIFSLFH). Cysteine 439 contributes to the heme binding site.

Belongs to the cytochrome P450 family. The cofactor is heme.

It localises to the membrane. It is found in the endoplasmic reticulum membrane. It catalyses the reaction a 12-hydroxyjasmonyl-L-alpha-amino acid + 2 reduced [NADPH--hemoprotein reductase] + 2 O2 = a 12-hydroxy-12-oxojasmonyl-L-alpha-amino acid + 2 oxidized [NADPH--hemoprotein reductase] + 3 H2O + 3 H(+). Its function is as follows. Involved in the oxidation of the plant hormone jasmonoyl-L-isoleucine (JA-Ile), a bioactive phytohormone of the jasmonate-mediated signaling pathway. Converts 12-hydroxy-JA-Ile (12OH-JA-Ile) to the carboxy-derivative 12COOH-JA-Ile. Exerts negative feedback control on JA-Ile levels and plays a role in attenuation of jasmonate responses. Also functions as in-chain fatty acids hydroxylase in vitro. Catalyzes the hydroxylation of 12-hydroxy-jasmonoyl-L-phenylalanine (12OH-JA-Phe) in vitro. Converts 12OH-JA-Phe to the carboxy-derivative 12COOH-JA-Phe. This is Cytochrome P450 94C1 from Arabidopsis thaliana (Mouse-ear cress).